Reading from the N-terminus, the 348-residue chain is Quinolinate synthase (348 aa).

Residues His47 and Ser68 each contribute to the iminosuccinate site. [4Fe-4S] cluster is bound at residue Cys113. Iminosuccinate-binding positions include 139-141 and Ser156; that span reads YAN. Cys200 serves as a coordination point for [4Fe-4S] cluster. Iminosuccinate contacts are provided by residues 226-228 and Thr243; that span reads HPE. Cys297 is a binding site for [4Fe-4S] cluster.

The protein belongs to the quinolinate synthase family. Type 1 subfamily. [4Fe-4S] cluster is required as a cofactor.

It is found in the cytoplasm. It carries out the reaction iminosuccinate + dihydroxyacetone phosphate = quinolinate + phosphate + 2 H2O + H(+). Its pathway is cofactor biosynthesis; NAD(+) biosynthesis; quinolinate from iminoaspartate: step 1/1. Its function is as follows. Catalyzes the condensation of iminoaspartate with dihydroxyacetone phosphate to form quinolinate. The sequence is that of Quinolinate synthase from Sodalis glossinidius (strain morsitans).